We begin with the raw amino-acid sequence, 347 residues long: UDP-3-O-acylglucosamine N-acyltransferase (347 aa).

Residue H248 is the Proton acceptor of the active site.

Belongs to the transferase hexapeptide repeat family. LpxD subfamily. In terms of assembly, homotrimer.

It catalyses the reaction a UDP-3-O-[(3R)-3-hydroxyacyl]-alpha-D-glucosamine + a (3R)-hydroxyacyl-[ACP] = a UDP-2-N,3-O-bis[(3R)-3-hydroxyacyl]-alpha-D-glucosamine + holo-[ACP] + H(+). It participates in bacterial outer membrane biogenesis; LPS lipid A biosynthesis. Catalyzes the N-acylation of UDP-3-O-acylglucosamine using 3-hydroxyacyl-ACP as the acyl donor. Is involved in the biosynthesis of lipid A, a phosphorylated glycolipid that anchors the lipopolysaccharide to the outer membrane of the cell. The chain is UDP-3-O-acylglucosamine N-acyltransferase from Parasynechococcus marenigrum (strain WH8102).